The primary structure comprises 463 residues: Cysteine--tRNA ligase (463 aa).

Cys27 contacts Zn(2+). The 'HIGH' region signature appears at 29-39; that stretch reads MTVYDYCHLGH. Zn(2+) is bound by residues Cys208, His233, and Glu237. The short motif at 265–269 is the 'KMSKS' region element; sequence KMSKS. An ATP-binding site is contributed by Lys268.

Belongs to the class-I aminoacyl-tRNA synthetase family. Monomer. Zn(2+) serves as cofactor.

It localises to the cytoplasm. It catalyses the reaction tRNA(Cys) + L-cysteine + ATP = L-cysteinyl-tRNA(Cys) + AMP + diphosphate. The chain is Cysteine--tRNA ligase from Marinobacter nauticus (strain ATCC 700491 / DSM 11845 / VT8) (Marinobacter aquaeolei).